The following is a 474-amino-acid chain: Bifunctional protein HldE (474 aa).

Residues 1 to 318 form a ribokinase region; that stretch reads MKLSMPRFDQ…RAVQREQGSE (318 aa). 194 to 197 contributes to the ATP binding site; it reads NLSE. Aspartate 263 is a catalytic residue. A cytidylyltransferase region spans residues 343 to 474; that stretch reads FTNGCFDILH…AIVEKIRQKG (132 aa).

This sequence in the N-terminal section; belongs to the carbohydrate kinase PfkB family. The protein in the C-terminal section; belongs to the cytidylyltransferase family. In terms of assembly, homodimer.

The enzyme catalyses D-glycero-beta-D-manno-heptose 7-phosphate + ATP = D-glycero-beta-D-manno-heptose 1,7-bisphosphate + ADP + H(+). The catalysed reaction is D-glycero-beta-D-manno-heptose 1-phosphate + ATP + H(+) = ADP-D-glycero-beta-D-manno-heptose + diphosphate. The protein operates within nucleotide-sugar biosynthesis; ADP-L-glycero-beta-D-manno-heptose biosynthesis; ADP-L-glycero-beta-D-manno-heptose from D-glycero-beta-D-manno-heptose 7-phosphate: step 1/4. It functions in the pathway nucleotide-sugar biosynthesis; ADP-L-glycero-beta-D-manno-heptose biosynthesis; ADP-L-glycero-beta-D-manno-heptose from D-glycero-beta-D-manno-heptose 7-phosphate: step 3/4. It participates in bacterial outer membrane biogenesis; LPS core biosynthesis. Functionally, catalyzes the phosphorylation of D-glycero-D-manno-heptose 7-phosphate at the C-1 position to selectively form D-glycero-beta-D-manno-heptose-1,7-bisphosphate. Its function is as follows. Catalyzes the ADP transfer from ATP to D-glycero-beta-D-manno-heptose 1-phosphate, yielding ADP-D-glycero-beta-D-manno-heptose. The protein is Bifunctional protein HldE of Pseudomonas aeruginosa (strain ATCC 15692 / DSM 22644 / CIP 104116 / JCM 14847 / LMG 12228 / 1C / PRS 101 / PAO1).